The chain runs to 196 residues: DNA replication complex GINS protein PSF1 (196 aa).

It belongs to the GINS1/PSF1 family. As to quaternary structure, component of the GINS complex which is a heterotetramer of gins1/psf1, gins2/psf2, gins3/psf3 and gins4/sld5. Component of the CMG helicase complex, composed of the mcm2-7 complex, the GINS complex and cdc45.

The protein resides in the nucleus. The protein localises to the chromosome. Functionally, required for correct functioning of the GINS complex, a complex that plays an essential role in the initiation of DNA replication, and progression of DNA replication forks. GINS complex is a core component of CDC45-MCM-GINS (CMG) helicase, the molecular machine that unwinds template DNA during replication, and around which the replisome is built. The chain is DNA replication complex GINS protein PSF1 from Xenopus laevis (African clawed frog).